The following is a 467-amino-acid chain: 6-phospho-beta-galactosidase (467 aa).

D-galactose 6-phosphate is bound by residues Gln-19, His-116, Asn-159, Glu-160, and Asn-297. Glu-160 acts as the Proton donor in catalysis. The Nucleophile role is filled by Glu-375. D-galactose 6-phosphate is bound by residues Ser-428, Trp-429, Lys-435, and Tyr-437.

The protein belongs to the glycosyl hydrolase 1 family.

The catalysed reaction is a 6-phospho-beta-D-galactoside + H2O = D-galactose 6-phosphate + an alcohol. It functions in the pathway carbohydrate metabolism; lactose degradation; D-galactose 6-phosphate and beta-D-glucose from lactose 6-phosphate: step 1/1. Its activity is regulated as follows. Inhibited by both galactose-6-phosphate and ATP. This is 6-phospho-beta-galactosidase from Leptotrichia buccalis (strain ATCC 14201 / DSM 1135 / JCM 12969 / NCTC 10249 / C-1013-b).